Here is a 1370-residue protein sequence, read N- to C-terminus: DNA-directed RNA polymerase subunit beta (1370 aa).

Belongs to the RNA polymerase beta chain family. The RNAP catalytic core consists of 2 alpha, 1 beta, 1 beta' and 1 omega subunit. When a sigma factor is associated with the core the holoenzyme is formed, which can initiate transcription.

It carries out the reaction RNA(n) + a ribonucleoside 5'-triphosphate = RNA(n+1) + diphosphate. Functionally, DNA-dependent RNA polymerase catalyzes the transcription of DNA into RNA using the four ribonucleoside triphosphates as substrates. The chain is DNA-directed RNA polymerase subunit beta from Geotalea daltonii (strain DSM 22248 / JCM 15807 / FRC-32) (Geobacter daltonii).